A 110-amino-acid polypeptide reads, in one-letter code: Insulin (110 aa).

The signal sequence occupies residues 1–24 (MALWMRLLPLLALLALWAPAPTRA). Disulfide bonds link Cys-31-Cys-96, Cys-43-Cys-109, and Cys-95-Cys-100. The propeptide at 57 to 87 (EVEDLQVRDVELAGAPGEGGLQPLALEGALQ) is c peptide.

The protein belongs to the insulin family. As to quaternary structure, heterodimer of a B chain and an A chain linked by two disulfide bonds.

It localises to the secreted. In terms of biological role, insulin decreases blood glucose concentration. It increases cell permeability to monosaccharides, amino acids and fatty acids. It accelerates glycolysis, the pentose phosphate cycle, and glycogen synthesis in liver. In Canis lupus familiaris (Dog), this protein is Insulin (INS).